Consider the following 328-residue polypeptide: Cytochrome c biogenesis protein CcsA (328 aa).

Helical transmembrane passes span 15-35 (FLVLFLTMMIYWVGAAFPSVP), 37-57 (LQALGTAGVAIANLCIAALLG), 68-88 (ISNLYESLFFLAWGVTAAHLI), 97-117 (LVGVVTTPVAMGISAFAALTL), 142-162 (VMMLSYATLMVGSALAIAFLF), 236-256 (IIGLGFPLLTIGIIAGAVWAN), 271-291 (WALITWLVFAAYLHARITKGW), and 297-317 (AILAASGFVVVWVCYLGVNLL).

Belongs to the CcmF/CycK/Ccl1/NrfE/CcsA family. May interact with ccs1.

The protein resides in the cellular thylakoid membrane. Its function is as follows. Required during biogenesis of c-type cytochromes (cytochrome c6 and cytochrome f) at the step of heme attachment. This chain is Cytochrome c biogenesis protein CcsA, found in Gloeothece citriformis (strain PCC 7424) (Cyanothece sp. (strain PCC 7424)).